The primary structure comprises 380 residues: Chorismate synthase (380 aa).

Arg48 is a binding site for NADP(+). Residues 126–128 (HFS), Gly300, 315–319 (KPISS), and Arg342 contribute to the FMN site.

Belongs to the chorismate synthase family. As to quaternary structure, homotetramer. The cofactor is FMNH2.

The catalysed reaction is 5-O-(1-carboxyvinyl)-3-phosphoshikimate = chorismate + phosphate. Its pathway is metabolic intermediate biosynthesis; chorismate biosynthesis; chorismate from D-erythrose 4-phosphate and phosphoenolpyruvate: step 7/7. Functionally, catalyzes the anti-1,4-elimination of the C-3 phosphate and the C-6 proR hydrogen from 5-enolpyruvylshikimate-3-phosphate (EPSP) to yield chorismate, which is the branch point compound that serves as the starting substrate for the three terminal pathways of aromatic amino acid biosynthesis. This reaction introduces a second double bond into the aromatic ring system. The protein is Chorismate synthase of Lancefieldella parvula (strain ATCC 33793 / DSM 20469 / CCUG 32760 / JCM 10300 / KCTC 3663 / VPI 0546 / 1246) (Atopobium parvulum).